A 287-amino-acid chain; its full sequence is ATP synthase gamma chain (287 aa).

The protein belongs to the ATPase gamma chain family. In terms of assembly, F-type ATPases have 2 components, CF(1) - the catalytic core - and CF(0) - the membrane proton channel. CF(1) has five subunits: alpha(3), beta(3), gamma(1), delta(1), epsilon(1). CF(0) has three main subunits: a, b and c.

The protein localises to the cell inner membrane. Functionally, produces ATP from ADP in the presence of a proton gradient across the membrane. The gamma chain is believed to be important in regulating ATPase activity and the flow of protons through the CF(0) complex. The chain is ATP synthase gamma chain from Marinobacter nauticus (strain ATCC 700491 / DSM 11845 / VT8) (Marinobacter aquaeolei).